The following is a 243-amino-acid chain: 7-cyano-7-deazaguanine synthase (243 aa).

ATP is bound at residue 18–28 (FSGGQDSATCL). Residues Cys206, Cys221, Cys224, and Cys227 each contribute to the Zn(2+) site.

Belongs to the QueC family. Zn(2+) is required as a cofactor.

The enzyme catalyses 7-carboxy-7-deazaguanine + NH4(+) + ATP = 7-cyano-7-deazaguanine + ADP + phosphate + H2O + H(+). It functions in the pathway purine metabolism; 7-cyano-7-deazaguanine biosynthesis. Its function is as follows. Catalyzes the ATP-dependent conversion of 7-carboxy-7-deazaguanine (CDG) to 7-cyano-7-deazaguanine (preQ(0)). This is 7-cyano-7-deazaguanine synthase from Methylorubrum extorquens (strain CM4 / NCIMB 13688) (Methylobacterium extorquens).